Reading from the N-terminus, the 112-residue chain is PTS system lactose-specific EIIA component (112 aa).

In terms of domain architecture, PTS EIIA type-3 spans 6 to 104 (EEISMVGFAL…TRYMIRMFKR (99 aa)). His80 acts as the Tele-phosphohistidine intermediate in catalysis. A Phosphohistidine; by HPr modification is found at His80. Asp83 provides a ligand contact to Mg(2+).

As to quaternary structure, homotrimer. Mg(2+) is required as a cofactor.

It localises to the cytoplasm. Functionally, the phosphoenolpyruvate-dependent sugar phosphotransferase system (sugar PTS), a major carbohydrate active transport system, catalyzes the phosphorylation of incoming sugar substrates concomitantly with their translocation across the cell membrane. The enzyme II LacEF PTS system is involved in lactose transport. The chain is PTS system lactose-specific EIIA component from Lacticaseibacillus casei (Lactobacillus casei).